The following is a 630-amino-acid chain: MKYNAGTFDVIVVGAGHAGCEAALAAARMGAKTLMLTMTLDSIAMMPCNPSIGGTGKGHLVREIDAIGGEMGINTDKTFIQSRMLNTGKGPAVHSLRAQADKNKYHTEMKKTIENEPNLLLKQAEVVDLIIEDNTVKGVVTRSGASFYSHSVILATGVYLRGKIYIGEVNYESGPNGLFPSMHLSEKLTKLGCNMRRFKTGTPARIHQDSVDFSKMEEHLGDEEIVPFSFMNDGIEKKQVPCWLTRTTGETHRVIMENLNRSAMYRGDMESVGPRYCPSIEDKVVRFSDKPSHQIFIEPEGLDTKEMYVQGMSTSLPEEVQDAMLKTVIGLESAVIMRPAYAIEYDCIDPTQLKPTLEVKHIENLFSGGQFNGTSGYEEAAAQGLMAGINAVLKTKGEEPFVLDRSEAYIGVLIDDLVTKGTNEPYRMMTSRAEYRLILRQDNADMRLTEKSYKIGLASKERLERYLLKKSHIEEEITRLKKTNVSPEKANPILEENKSSLIKAGMSLYDLLKRPEVTYKVLKKIDENRNVDIVRDAQEQCEIIIKYEGYIEKQLRQIDQFKKLENKILPQEIDYHGIDGLRLEARQKLSDIQPMSVGQASRISGVSPSDISVLMIYLEQRRRQKNGGGT.

FAD is bound by residues 14–19, Val-126, and Ser-181; that span reads GAGHAG. 273 to 287 contributes to the NAD(+) binding site; the sequence is GPRYCPSIEDKVVRF. Gln-370 provides a ligand contact to FAD.

It belongs to the MnmG family. Homodimer. Heterotetramer of two MnmE and two MnmG subunits. FAD is required as a cofactor.

It localises to the cytoplasm. Its function is as follows. NAD-binding protein involved in the addition of a carboxymethylaminomethyl (cmnm) group at the wobble position (U34) of certain tRNAs, forming tRNA-cmnm(5)s(2)U34. The polypeptide is tRNA uridine 5-carboxymethylaminomethyl modification enzyme MnmG (Alkaliphilus metalliredigens (strain QYMF)).